A 285-amino-acid chain; its full sequence is NADPH-dependent 7-cyano-7-deazaguanine reductase (285 aa).

91–93 contributes to the substrate binding site; that stretch reads IES. 93–94 provides a ligand contact to NADPH; sequence SK. Cys-191 functions as the Thioimide intermediate in the catalytic mechanism. Asp-198 functions as the Proton donor in the catalytic mechanism. 230–231 lines the substrate pocket; that stretch reads HE. 259 to 260 is a binding site for NADPH; the sequence is RG.

The protein belongs to the GTP cyclohydrolase I family. QueF type 2 subfamily. As to quaternary structure, homodimer.

Its subcellular location is the cytoplasm. It catalyses the reaction 7-aminomethyl-7-carbaguanine + 2 NADP(+) = 7-cyano-7-deazaguanine + 2 NADPH + 3 H(+). Its pathway is tRNA modification; tRNA-queuosine biosynthesis. Catalyzes the NADPH-dependent reduction of 7-cyano-7-deazaguanine (preQ0) to 7-aminomethyl-7-deazaguanine (preQ1). This Legionella pneumophila (strain Lens) protein is NADPH-dependent 7-cyano-7-deazaguanine reductase.